Reading from the N-terminus, the 859-residue chain is Low-density lipoprotein receptor-related protein 12 (859 aa).

A signal peptide spans 1–32; that stretch reads MARRWSTKESPRWRSALLLLFLAGVYGNGALA. The Extracellular segment spans residues 33–492; that stretch reads EHSENVHISG…ENCPVIVPTR (460 aa). Disulfide bonds link C47/C76 and C103/C122. Residues 47-159 form the CUB 1 domain; the sequence is CGETPEQIRA…KGFRLAYFSG (113 aa). N75 is a glycosylation site (N-linked (GlcNAc...) asparagine). The N-linked (GlcNAc...) asparagine glycan is linked to N146. LDL-receptor class A domains follow at residues 165-201 and 214-255; these read NCACDQFRCGNGKCIPEAWKCNNMDECGDSSDEEICA and PCAY…IDCD. Cystine bridges form between C166–C178, C173–C191, C185–C200, C215–C232, C222–C245, C239–C254, and C259–C285. A CUB 2 domain is found at 259–372; the sequence is CGQWLKYFYG…RGFNATYQVD (114 aa). N-linked (GlcNAc...) asparagine glycans are attached at residues N284 and N366. 3 consecutive LDL-receptor class A domains span residues 374-411, 412-449, and 450-486; these read FCLPWEIPCGGNWGCYTEQQRCDGYWHCPNGRDEINCT, MCQKEEFPCSRNGVCYPRSDRCNYQNHCPNGSDEKNCF, and FCQPGNFHCKNNRCVFESWVCDSQDDCGDGSDEENCP. Cystine bridges form between C375–C388, C382–C401, C395–C410, C413–C426, C420–C439, C433–C448, C451–C463, C458–C476, and C470–C485. N-linked (GlcNAc...) asparagine glycosylation occurs at N409. N441 carries an N-linked (GlcNAc...) asparagine glycan. The chain crosses the membrane as a helical span at residues 493–513; that stretch reads VITAAVIGSLICGLLLVIALG. At 514 to 859 the chain is on the cytoplasmic side; the sequence is CTCKLYSLRM…TSDDEALLLC (346 aa). Disordered regions lie at residues 623 to 678, 693 to 723, 748 to 770, and 802 to 823; these read ADGD…LPQK, ASSSTQSTRGGHADNGRDVTSVEPPSVSPAR, SSVSQNQSPLRQLDNGVSGREDD, and QGQGLRQPYNATNPGVRPSNRD. 2 stretches are compositionally biased toward polar residues: residues 748 to 757 and 802 to 814; these read SSVSQNQSPL and QGQGLRQPYNATN.

This sequence belongs to the LDLR family. In terms of assembly, may interact with RACK1, ZFYVE9 and NMRK2.

It localises to the membrane. The protein localises to the coated pit. In terms of biological role, probable receptor, which may be involved in the internalization of lipophilic molecules and/or signal transduction. May act as a tumor suppressor. The sequence is that of Low-density lipoprotein receptor-related protein 12 (LRP12) from Pongo abelii (Sumatran orangutan).